A 493-amino-acid chain; its full sequence is Voltage-gated potassium channel regulatory subunit KCNF1 (493 aa).

Topologically, residues 1–183 (MDASAEQSLP…KPESSCPARV (183 aa)) are cytoplasmic. Residues 184–204 (VAVLSFLLILVSSVVMCMGTI) traverse the membrane as a helical segment. The Extracellular portion of the chain corresponds to 205 to 223 (PELQVVDSEGNRVEHPTLE). Residues 224-244 (NVETACIGWFTLEYLLRLFSS) traverse the membrane as a helical segment. Topologically, residues 245–249 (PNKLH) are cytoplasmic. The helical transmembrane segment at 250–270 (FALSFMNIVDVLAILPFYVSL) threads the bilayer. The Extracellular portion of the chain corresponds to 271–289 (TLTHLGARMMELTNVQQAV). The helical; Voltage-sensor transmembrane segment at 290–310 (QALRIMRIARIFKLARHSSGL) threads the bilayer. The Cytoplasmic portion of the chain corresponds to 311–324 (QTLTYALKRSFKEL). The helical transmembrane segment at 325-345 (GLLLMYLAVGIFVFSALGYTM) threads the bilayer. Over 346-357 (EQSHPETLFKSI) the chain is Extracellular. Positions 358–378 (PQSFWWAIITMTTVGYGDIYP) form an intramembrane region, pore-forming. The Selectivity filter motif lies at 370-375 (TVGYGD). Residues 379–385 (KTTLGKL) are Extracellular-facing. The chain crosses the membrane as a helical span at residues 386–406 (NAAISFLCGVIAIALPIHPII). The Cytoplasmic portion of the chain corresponds to 407-493 (NNFVRYYNKQ…HHRTRLQSCK (87 aa)). Residues 433-468 (NSSSAESKPGGSRSDLDTLPPEPAAREGPSWGSRLK) are disordered.

It belongs to the potassium channel family. F (TC 1.A.1.2) subfamily. Kv5.1/KCNF1 sub-subfamily. In terms of assembly, heterotetramer with KCNB1 or KCNB2. Expressed in brain namely in the piriform cortex, olfactory tubercle, and medial habenular nucleus. Also expressed in the medial amygdaloid nuclei and the lateral amygdaloid area.

It is found in the cell membrane. Regulatory alpha-subunit of the voltage-gated potassium (Kv) channel which, when coassembled with KCNB1 or KCNB2, can modulate their expression and their gating kinetics by acting on deactivation upon repolarization and inactivation during maintained depolarization. Accelerates inactivation but has relatively little effect on deactivation. Coexpression with KCNB1 or KCNB2 markedly slows inactivation. Each modulatory subunit has its own specific properties of regulation, and can lead to extensive inhibitions, to large changes in kinetics, and/or to large shifts in the voltage dependencies of the inactivation process. The gating kinetics depends on the nature and stoichiometry of the associated regulatory sunbunit. Fails to produce a potassium current when expressed alone. In Rattus norvegicus (Rat), this protein is Voltage-gated potassium channel regulatory subunit KCNF1.